A 1495-amino-acid polypeptide reads, in one-letter code: DNA-directed RNA polymerase subunit 1 (1495 aa).

Belongs to the RNA polymerase beta' chain family.

The protein resides in the virion. The enzyme catalyses RNA(n) + a ribonucleoside 5'-triphosphate = RNA(n+1) + diphosphate. In terms of biological role, DNA-dependent RNA polymerase catalyzes the transcription of DNA into RNA using the four ribonucleoside triphosphates as substrates. This Acanthamoeba polyphaga (Amoeba) protein is DNA-directed RNA polymerase subunit 1 (RPO1).